A 464-amino-acid chain; its full sequence is Dolichyl-diphosphooligosaccharide--protein glycosyltransferase subunit 1B (464 aa).

Positions 1-24 (MAARIGIFSVFVAVLLSISAFSSA) are cleaved as a signal peptide. At 25–436 (QDLQIVNAER…TFKPIYMLAE (412 aa)) the chain is on the lumenal side. 2 N-linked (GlcNAc...) asparagine glycosylation sites follow: Asn-106 and Asn-298. Lys-310 is covalently cross-linked (Glycyl lysine isopeptide (Lys-Gly) (interchain with G-Cter in ubiquitin)). Asn-352 carries N-linked (GlcNAc...) asparagine glycosylation. The helical transmembrane segment at 437 to 457 (PFMLVSAFFLVFVASLAYVHI) threads the bilayer. At 458–464 (DLNIVRK) the chain is on the cytoplasmic side.

The protein belongs to the OST1 family. In terms of assembly, component of the oligosaccharyltransferase (OST) complex.

It localises to the endoplasmic reticulum membrane. Its pathway is protein modification; protein glycosylation. In terms of biological role, subunit of the oligosaccharyl transferase (OST) complex that catalyzes the initial transfer of a defined glycan (Glc(3)Man(9)GlcNAc(2) in eukaryotes) from the lipid carrier dolichol-pyrophosphate to an asparagine residue within an Asn-X-Ser/Thr consensus motif in nascent polypeptide chains, the first step in protein N-glycosylation. N-glycosylation occurs cotranslationally and the complex associates with the Sec61 complex at the channel-forming translocon complex that mediates protein translocation across the endoplasmic reticulum (ER). All subunits are required for a maximal enzyme activity. The sequence is that of Dolichyl-diphosphooligosaccharide--protein glycosyltransferase subunit 1B (OST1B) from Arabidopsis thaliana (Mouse-ear cress).